Here is a 307-residue protein sequence, read N- to C-terminus: Acyl transferase (307 aa).

Catalysis depends on charge relay system residues Ser116, Asp213, and His243.

This sequence belongs to the LuxD family.

Its pathway is lipid metabolism; fatty acid reduction for biolumincescence. Functionally, acyl transferase is part of the fatty acid reductase system required for aldehyde biosynthesis; it produces fatty acids for the luminescent reaction. In Photorhabdus laumondii subsp. laumondii (strain DSM 15139 / CIP 105565 / TT01) (Photorhabdus luminescens subsp. laumondii), this protein is Acyl transferase.